A 475-amino-acid polypeptide reads, in one-letter code: MMPFEAVIGLEVHVQLNTKTKIFCSCSTSFGESPNSNTCPVCLGLPGALPVLNKEVVKKAIQLGTAIEANINQYSIFARKNYFYPDLPKAYQISQFEVPIVSDGKLEIDTKDGAKIVRIERVHMEEDAGKNIHEGSYSLVDLNRACTPLLEIVSKPDMRNSEEAIAYLKKLHAIVRFIGISDANMQEGNFRCDANVSIRPKGDEKLYTRVEIKNLNSFRFIAKAIEYEIERQSAAWESGRYHEEVVQETRLFDTAKGITLSMRNKEESADYRYFKDPDLYPVFIDEKLLKEAQKINELPGAKKIRYVRDFNLKEDDANLLVSDPLLAEYFESMLNLGVKAKTSVTWLCVELLGRLKAETTLENCGVSAHMLGALAKRIDEGKISGKSAKDVLDKLLEEKGGDVDALIEQMGLSQVNDTEAIVKVVEEVLKNNADKVLEYKSGKDKLFGFFVGQAMKNLKGANPSVVNAILKEKLD.

It belongs to the GatB/GatE family. GatB subfamily. As to quaternary structure, heterotrimer of A, B and C subunits.

It catalyses the reaction L-glutamyl-tRNA(Gln) + L-glutamine + ATP + H2O = L-glutaminyl-tRNA(Gln) + L-glutamate + ADP + phosphate + H(+). The catalysed reaction is L-aspartyl-tRNA(Asn) + L-glutamine + ATP + H2O = L-asparaginyl-tRNA(Asn) + L-glutamate + ADP + phosphate + 2 H(+). Allows the formation of correctly charged Asn-tRNA(Asn) or Gln-tRNA(Gln) through the transamidation of misacylated Asp-tRNA(Asn) or Glu-tRNA(Gln) in organisms which lack either or both of asparaginyl-tRNA or glutaminyl-tRNA synthetases. The reaction takes place in the presence of glutamine and ATP through an activated phospho-Asp-tRNA(Asn) or phospho-Glu-tRNA(Gln). This is Aspartyl/glutamyl-tRNA(Asn/Gln) amidotransferase subunit B from Helicobacter pylori (strain HPAG1).